We begin with the raw amino-acid sequence, 92 residues long: MTRSVWKGPFVDAYVLKKAEKTRESGRNEVIKIWSRRSTILPQFVGLTFGVYNGRKHIPVNVTEDMIGQKFGEYSPTRTYYGHAADKKAKRK.

It belongs to the universal ribosomal protein uS19 family.

Protein S19 forms a complex with S13 that binds strongly to the 16S ribosomal RNA. The sequence is that of Small ribosomal subunit protein uS19 from Dinoroseobacter shibae (strain DSM 16493 / NCIMB 14021 / DFL 12).